The sequence spans 358 residues: F-box only protein 25 (358 aa).

Residues 1-83 are interaction with beta-actin; that stretch reads MPFLGQDWRS…NDTNTQSFYR (83 aa). In terms of domain architecture, F-box spans 226–274; that stretch reads LTLSDLPLHMLNNILYRFSDGWDIITLGQVTPTLYMLSEDRQLWKKLCQ.

In terms of assembly, part of a SCF (SKP1-cullin-F-box) protein ligase complex consisting of FBXO25, SKP1, CUL1 and RBX1. Interacts directly with SKP1 and CUL1. Interacts (via C-terminus) with beta-actin (via N-terminus).

It is found in the nucleus. Its pathway is protein modification; protein ubiquitination. Its function is as follows. Substrate-recognition component of the SCF (SKP1-CUL1-F-box protein)-type E3 ubiquitin ligase complex. May play a role in accumulation of expanded polyglutamine (polyQ) protein huntingtin (HTT). The protein is F-box only protein 25 (FBXO25) of Macaca fascicularis (Crab-eating macaque).